The chain runs to 1314 residues: Angiotensin-converting enzyme (1314 aa).

The signal sequence occupies residues 1–35 (MGAASGQRGQGPPSPLLLLWLSLLLLLLPPSPAPA). At 36–1265 (LDPGLQPGNF…LEPQQARVGQ (1230 aa)) the chain is on the extracellular side. Asparagine 44, asparagine 60, asparagine 80, asparagine 117, and asparagine 166 each carry an N-linked (GlcNAc...) asparagine glycan. 2 consecutive Peptidase M2 domains span residues 46-630 (SADE…LGWP) and 649-1228 (VTDE…LGWP). Cysteine 163 and cysteine 171 are joined by a disulfide. Tyrosine 237 provides a ligand contact to chloride. Asparagine 324 is a glycosylation site (N-linked (GlcNAc...) asparagine). A disulfide bridge connects residues cysteine 365 and cysteine 383. Histidine 396 provides a ligand contact to Zn(2+). Glutamate 397 (proton acceptor 1) is an active-site residue. The Zn(2+) site is built by histidine 400 and glutamate 424. A glycan (N-linked (GlcNAc...) asparagine) is linked at asparagine 515. Residue histidine 526 is the Proton donor 1 of the active site. Arginine 535 provides a ligand contact to chloride. Cysteine 551 and cysteine 563 form a disulfide bridge. Residues asparagine 683, asparagine 701, asparagine 720, and asparagine 766 are each glycosylated (N-linked (GlcNAc...) asparagine). A disulfide bridge connects residues cysteine 763 and cysteine 769. Chloride-binding residues include arginine 797 and tyrosine 835. Residue asparagine 948 is glycosylated (N-linked (GlcNAc...) asparagine). A disulfide bridge connects residues cysteine 963 and cysteine 981. Histidine 994 lines the Zn(2+) pocket. Glutamate 995 functions as the Proton acceptor 2 in the catalytic mechanism. The Zn(2+) site is built by histidine 998 and glutamate 1022. The chloride site is built by tryptophan 1096 and arginine 1100. Residue histidine 1124 is the Proton donor 2 of the active site. Arginine 1133 contributes to the chloride binding site. Cysteine 1149 and cysteine 1161 are joined by a disulfide. N-linked (GlcNAc...) asparagine glycosylation is present at asparagine 1197. Residues 1221–1262 (HGETLGWPEYNWTPNTARSEGPFPESGRVNFLGMYLEPQQAR) are juxtamembrane stalk. Residues 1266–1282 (WVLLFLGVSLLVATLGL) form a helical membrane-spanning segment. Residues 1283-1314 (THRLFSIRQHGHSLHRPHRGPQFGSEVELRHS) are Cytoplasmic-facing. Residues 1293-1314 (GHSLHRPHRGPQFGSEVELRHS) are disordered. Serine 1307 carries the phosphoserine modification.

The protein belongs to the peptidase M2 family. In terms of assembly, monomer and homodimer; homodimerizes following binding to an inhibitor. Interacts with calmodulin (CALM1, CALM2 or CALM3); interaction takes place in the cytoplasmic region and regulates phosphorylation and proteolytic cleavage. Zn(2+) serves as cofactor. Chloride is required as a cofactor. Produced following proteolytic cleavage by secretase enzymes that cleave the transmembrane form in the juxtamembrane stalk region upstream of the transmembrane region. Cleavage can take place at different sites of the juxtamembrane stalk region. Post-translationally, phosphorylated by CK2 on Ser-1307; which allows membrane retention. Phosphorylated on tyrosine residues on its extracellular part, promoting cleavage by secretase enzymes and formation of the soluble form (Angiotensin-converting enzyme, soluble form). In terms of tissue distribution, widely expressed with dominant expression in lung and kidney.

It localises to the cell membrane. It is found in the cytoplasm. The protein resides in the secreted. The catalysed reaction is Release of a C-terminal dipeptide, oligopeptide-|-Xaa-Yaa, when Xaa is not Pro, and Yaa is neither Asp nor Glu. Thus, conversion of angiotensin I to angiotensin II, with increase in vasoconstrictor activity, but no action on angiotensin II.. The enzyme catalyses angiotensin I + H2O = L-histidyl-L-leucine + angiotensin II. It catalyses the reaction bradykinin + H2O = L-Phe-L-Arg + bradykinin(1-7). It carries out the reaction substance P + H2O = substance P(1-9) + L-Leu-L-Met-NH2. The catalysed reaction is substance P + H2O = substance P(1-8) + Gly-L-Leu-L-Met-NH2. The enzyme catalyses substance P + H2O = L-Phe-L-Phe-Gly-L-Leu-L-Met-NH2 + substance P(1-6). It catalyses the reaction neurotensin + H2O = neurotensin(1-11) + L-isoleucyl-L-leucine. It carries out the reaction goralatide + H2O = N-acetyl-L-seryl-L-aspartate + L-lysyl-L-proline. The catalysed reaction is Met-enkephalin + H2O = L-phenylalanyl-L-methionine + L-tyrosylglycylglycine. The enzyme catalyses Leu-enkephalin + H2O = L-tyrosylglycylglycine + L-phenylalanyl-L-leucine. It catalyses the reaction Met-enkephalin-Arg-Phe + H2O = L-arginyl-L-phenylalanine + Met-enkephalin. Its activity is regulated as follows. The dipeptidyl carboxypeptidase activity is strongly activated by chloride. The dipeptidyl carboxypeptidase activity is specifically inhibited by lisinopril, captopril and enalaprilat. With respect to regulation, strongly inhibited by lisinopril and captopril. In terms of biological role, dipeptidyl carboxypeptidase that removes dipeptides from the C-terminus of a variety of circulating hormones, such as angiotensin I, bradykinin or enkephalins, thereby playing a key role in the regulation of blood pressure, electrolyte homeostasis or synaptic plasticity. Composed of two similar catalytic domains, each possessing a functional active site, with different selectivity for substrates. Plays a major role in the angiotensin-renin system that regulates blood pressure and sodium retention by the kidney by converting angiotensin I to angiotensin II, resulting in an increase of the vasoconstrictor activity of angiotensin. Also able to inactivate bradykinin, a potent vasodilator, and therefore enhance the blood pressure response. Acts as a regulator of synaptic transmission by mediating cleavage of neuropeptide hormones, such as substance P, neurotensin or enkephalins. Catalyzes degradation of different enkephalin neuropeptides (Met-enkephalin, Leu-enkephalin, Met-enkephalin-Arg-Phe and possibly Met-enkephalin-Arg-Gly-Leu). Acts as a regulator of synaptic plasticity in the nucleus accumbens of the brain by mediating cleavage of Met-enkephalin-Arg-Phe, a strong ligand of Mu-type opioid receptor OPRM1, into Met-enkephalin. Met-enkephalin-Arg-Phe cleavage by ACE decreases activation of OPRM1, leading to long-term synaptic potentiation of glutamate release. Also acts as a regulator of hematopoietic stem cell differentiation by mediating degradation of hemoregulatory peptide N-acetyl-SDKP (AcSDKP). Acts as a regulator of cannabinoid signaling pathway by mediating degradation of hemopressin, an antagonist peptide of the cannabinoid receptor CNR1. Involved in amyloid-beta metabolism by catalyzing degradation of Amyloid-beta protein 40 and Amyloid-beta protein 42 peptides, thereby preventing plaque formation. Catalyzes cleavage of cholecystokinin (maturation of Cholecystokinin-8 and Cholecystokinin-5) and Gonadoliberin-1 (both maturation and degradation) hormones. Degradation of hemoregulatory peptide N-acetyl-SDKP (AcSDKP) and amyloid-beta proteins is mediated by the N-terminal catalytic domain, while angiotensin I and cholecystokinin cleavage is mediated by the C-terminal catalytic region. Functionally, soluble form that is released in blood plasma and other body fluids following proteolytic cleavage in the juxtamembrane stalk region. Isoform produced by alternative promoter usage that is specifically expressed in spermatocytes and adult testis, and which is required for male fertility. In contrast to somatic isoforms, only contains one catalytic domain. Acts as a dipeptidyl carboxypeptidase that removes dipeptides from the C-terminus of substrates. The identity of substrates that are needed for male fertility is unknown. May also have a glycosidase activity which releases GPI-anchored proteins from the membrane by cleaving the mannose linkage in the GPI moiety. The GPIase activity was reported to be essential for the egg-binding ability of the sperm. This activity is however unclear and has been challenged by other groups, suggesting that it may be indirect. This Mesocricetus auratus (Golden hamster) protein is Angiotensin-converting enzyme.